The sequence spans 590 residues: Aspartate--tRNA(Asp/Asn) ligase (590 aa).

Residue glutamate 175 coordinates L-aspartate. An aspartate region spans residues glutamine 199–lysine 202. 2 residues coordinate L-aspartate: arginine 221 and histidine 452. Residue arginine 221 to glutamate 223 coordinates ATP. Glutamate 485 lines the ATP pocket. Arginine 492 is a binding site for L-aspartate. Glycine 537–arginine 540 is an ATP binding site.

Belongs to the class-II aminoacyl-tRNA synthetase family. Type 1 subfamily. Homodimer.

The protein resides in the cytoplasm. It carries out the reaction tRNA(Asx) + L-aspartate + ATP = L-aspartyl-tRNA(Asx) + AMP + diphosphate. Functionally, aspartyl-tRNA synthetase with relaxed tRNA specificity since it is able to aspartylate not only its cognate tRNA(Asp) but also tRNA(Asn). Reaction proceeds in two steps: L-aspartate is first activated by ATP to form Asp-AMP and then transferred to the acceptor end of tRNA(Asp/Asn). The protein is Aspartate--tRNA(Asp/Asn) ligase of Dinoroseobacter shibae (strain DSM 16493 / NCIMB 14021 / DFL 12).